Consider the following 596-residue polypeptide: Phosphomethylpyrimidine synthase 1 (596 aa).

Substrate-binding positions include N228, M257, Y286, H322, 342–344 (SRG), 383–386 (DGLR), and E422. H426 provides a ligand contact to Zn(2+). Residue Y449 participates in substrate binding. H490 is a Zn(2+) binding site. [4Fe-4S] cluster contacts are provided by C570, C573, and C578.

The protein belongs to the ThiC family. In terms of assembly, homodimer. [4Fe-4S] cluster is required as a cofactor.

The enzyme catalyses 5-amino-1-(5-phospho-beta-D-ribosyl)imidazole + S-adenosyl-L-methionine = 4-amino-2-methyl-5-(phosphooxymethyl)pyrimidine + CO + 5'-deoxyadenosine + formate + L-methionine + 3 H(+). It participates in cofactor biosynthesis; thiamine diphosphate biosynthesis. Catalyzes the synthesis of the hydroxymethylpyrimidine phosphate (HMP-P) moiety of thiamine from aminoimidazole ribotide (AIR) in a radical S-adenosyl-L-methionine (SAM)-dependent reaction. This is Phosphomethylpyrimidine synthase 1 from Syntrophotalea carbinolica (strain DSM 2380 / NBRC 103641 / GraBd1) (Pelobacter carbinolicus).